We begin with the raw amino-acid sequence, 222 residues long: Probable septum site-determining protein MinC (222 aa).

It belongs to the MinC family. In terms of assembly, interacts with MinD and FtsZ.

Functionally, cell division inhibitor that blocks the formation of polar Z ring septums. Rapidly oscillates between the poles of the cell to destabilize FtsZ filaments that have formed before they mature into polar Z rings. Prevents FtsZ polymerization. In Lysinibacillus sphaericus (strain C3-41), this protein is Probable septum site-determining protein MinC.